The primary structure comprises 288 residues: Polyamine aminopropyltransferase (288 aa).

Positions 9 to 238 (ETLHDQFGQY…GIMTFAWATD (230 aa)) constitute a PABS domain. Residue Gln-33 participates in S-methyl-5'-thioadenosine binding. Residues His-64 and Asp-88 each contribute to the spermidine site. S-methyl-5'-thioadenosine-binding positions include Glu-108 and 140–141 (DG). Asp-158 functions as the Proton acceptor in the catalytic mechanism. Spermidine is bound at residue 158–161 (DCTD). Pro-165 lines the S-methyl-5'-thioadenosine pocket.

Belongs to the spermidine/spermine synthase family. In terms of assembly, homodimer or homotetramer.

It is found in the cytoplasm. It catalyses the reaction S-adenosyl 3-(methylsulfanyl)propylamine + putrescine = S-methyl-5'-thioadenosine + spermidine + H(+). The protein operates within amine and polyamine biosynthesis; spermidine biosynthesis; spermidine from putrescine: step 1/1. In terms of biological role, catalyzes the irreversible transfer of a propylamine group from the amino donor S-adenosylmethioninamine (decarboxy-AdoMet) to putrescine (1,4-diaminobutane) to yield spermidine. This chain is Polyamine aminopropyltransferase, found in Shigella boydii serotype 4 (strain Sb227).